The primary structure comprises 231 residues: Cytidylate kinase (231 aa).

11–19 (GHSSCGKST) provides a ligand contact to ATP.

The protein belongs to the cytidylate kinase family. Type 1 subfamily.

It is found in the cytoplasm. The catalysed reaction is CMP + ATP = CDP + ADP. It carries out the reaction dCMP + ATP = dCDP + ADP. The polypeptide is Cytidylate kinase (Porphyromonas gingivalis (strain ATCC BAA-308 / W83)).